We begin with the raw amino-acid sequence, 1183 residues long: ATP-dependent helicase/nuclease subunit A (1183 aa).

Positions 3–461 (VQWTDEQQRA…IDLTKNFRSR (459 aa)) constitute a UvrD-like helicase ATP-binding domain. 24-31 (AAAGSGKT) contributes to the ATP binding site. A UvrD-like helicase C-terminal domain is found at 473-769 (RQVMDEAVGE…RIMTIHQSKG (297 aa)).

It belongs to the helicase family. AddA subfamily. Heterodimer of AddA and AddB/RexB. Requires Mg(2+) as cofactor.

It catalyses the reaction Couples ATP hydrolysis with the unwinding of duplex DNA by translocating in the 3'-5' direction.. The catalysed reaction is ATP + H2O = ADP + phosphate + H(+). Its function is as follows. The heterodimer acts as both an ATP-dependent DNA helicase and an ATP-dependent, dual-direction single-stranded exonuclease. Recognizes the chi site generating a DNA molecule suitable for the initiation of homologous recombination. The AddA nuclease domain is required for chi fragment generation; this subunit has the helicase and 3' -&gt; 5' nuclease activities. The protein is ATP-dependent helicase/nuclease subunit A of Exiguobacterium sibiricum (strain DSM 17290 / CCUG 55495 / CIP 109462 / JCM 13490 / 255-15).